The sequence spans 1334 residues: Putative transmembrane protein ORF1334 (1334 aa).

The chain crosses the membrane as a helical span at residues 53–73 (VSIVVLVLTLFIIPVIIPPAH). The interval 1107 to 1135 (LSASTTPPSSTTPTPPSSSSSSSSSSSIS) is disordered. The span at 1110–1135 (STTPPSSTTPTPPSSSSSSSSSSSIS) shows a compositional bias: low complexity. The next 3 helical transmembrane spans lie at 1256–1276 (AVLP…SFFI), 1292–1312 (IIYI…TSVV), and 1313–1333 (YGTV…SRSQ).

Its subcellular location is the host membrane. The sequence is that of Putative transmembrane protein ORF1334 from Acidianus two-tailed virus (ATV).